A 130-amino-acid chain; its full sequence is 3-aminoacrylate deaminase RutC (130 aa).

It belongs to the RutC family.

It carries out the reaction (Z)-3-aminoacrylate + H2O + H(+) = 3-oxopropanoate + NH4(+). Its function is as follows. Involved in pyrimidine catabolism. Catalyzes the deamination of 3-aminoacrylate to malonic semialdehyde, a reaction that can also occur spontaneously. RutC may facilitate the reaction and modulate the metabolic fitness, rather than catalyzing essential functions. The chain is 3-aminoacrylate deaminase RutC from Haliangium ochraceum (strain DSM 14365 / JCM 11303 / SMP-2).